Reading from the N-terminus, the 77-residue chain is U11-lycotoxin-Ls1b (77 aa).

The first 20 residues, 1-20 (MKLIIFTGLALFAIVSLIEA), serve as a signal peptide directing secretion. The propeptide occupies 21 to 26 (EEESGR).

The protein belongs to the neurotoxin 19 (CSTX) family. 10 (U11-Lctx) subfamily. Contains 4 disulfide bonds. Expressed by the venom gland.

Its subcellular location is the secreted. The protein is U11-lycotoxin-Ls1b of Lycosa singoriensis (Wolf spider).